Reading from the N-terminus, the 359-residue chain is Peptide chain release factor 1 (359 aa).

Q236 carries the post-translational modification N5-methylglutamine.

This sequence belongs to the prokaryotic/mitochondrial release factor family. In terms of processing, methylated by PrmC. Methylation increases the termination efficiency of RF1.

Its subcellular location is the cytoplasm. Its function is as follows. Peptide chain release factor 1 directs the termination of translation in response to the peptide chain termination codons UAG and UAA. This is Peptide chain release factor 1 from Streptococcus pneumoniae serotype 2 (strain D39 / NCTC 7466).